A 235-amino-acid polypeptide reads, in one-letter code: Thiamine import ATP-binding protein ThiQ (235 aa).

An ABC transporter domain is found at 2–230; sequence LKLENLTYRY…TVPEAAILGM (229 aa). Residue 32-39 coordinates ATP; it reads GPSGAGKS.

Belongs to the ABC transporter superfamily. Thiamine importer (TC 3.A.1.19.1) family. The complex is composed of two ATP-binding proteins (ThiQ), two transmembrane proteins (ThiP) and a solute-binding protein (ThiB).

The protein resides in the cell inner membrane. The enzyme catalyses thiamine(out) + ATP + H2O = thiamine(in) + ADP + phosphate + H(+). In terms of biological role, part of the ABC transporter complex ThiBPQ involved in thiamine import. Responsible for energy coupling to the transport system. The sequence is that of Thiamine import ATP-binding protein ThiQ from Photorhabdus laumondii subsp. laumondii (strain DSM 15139 / CIP 105565 / TT01) (Photorhabdus luminescens subsp. laumondii).